A 395-amino-acid chain; its full sequence is Zinc finger protein HD1 (395 aa).

The segment at 30–72 adopts a B box-type 1; atypical zinc-finger fold; sequence PWARPCDGCRAAPSVVYCRADAAYLCASCDARVHAANRVASRH. Residues Cys35, Cys38, Cys58, His63, Cys78, Cys81, Cys101, and His106 each contribute to the Zn(2+) site. The B box-type 2; atypical zinc-finger motif lies at 73–117; sequence ERVRVCEACERAPAALACRADAAALCVACDVQVHSANPLPAITIP. Disordered stretches follow at residues 147–176 and 208–228; these read SKDSDNNNNNNNNNDNDNNDNNNSNSSNNG and GMHEQQEQQQQQQEMQKEFAE. Positions 152–175 are enriched in low complexity; sequence NNNNNNNNNDNDNNDNNNSNSSNN. Positions 326 to 368 constitute a CCT domain; it reads REARVLRYREKKKARKFEKTIRYETRKAYAEARPRIKGRFAKR.

This sequence belongs to the CONSTANS family. As to quaternary structure, interacts with HAL3 in the dark. Phosphorylated by OSK4 in the presence of HDR1.

It localises to the nucleus. Its function is as follows. Probable transcription factor involved in the regulation of flower development. Required for the promotion of flowering under short day (SD) conditions and the suppression of flowering under long day (LD) conditions. Positively regulates the floral activator HEADING DATE 3a (HD3A) under SD and negatively under LD conditions. In Oryza sativa subsp. japonica (Rice), this protein is Zinc finger protein HD1.